Reading from the N-terminus, the 224-residue chain is MASICTSNFHFLCRKNNSSPISHHLLLSPSSLSFSRCGGLRLCRCAAVKTGSEGGGIRSDNAELLRKPVISTELETTSESEELVKEESDDEVGKKSGDGEGWVDWEDQILEDTVPLVGFVRMILHSGKYAIGDRLSPDHQRTILQRLLPYHPECDKKIGPGVDYITVGYHPDFENSRCLFIVRKDGETVDFSYWKCIKGLIRKNYPLYADSFILRHFRKRRRND.

A chloroplast-targeting transit peptide spans 1 to 50; that stretch reads MASICTSNFHFLCRKNNSSPISHHLLLSPSSLSFSRCGGLRLCRCAAVKT. The disordered stretch occupies residues 76 to 98; the sequence is TTSESEELVKEESDDEVGKKSGD. The segment covering 82–98 has biased composition (basic and acidic residues); sequence ELVKEESDDEVGKKSGD.

Its subcellular location is the plastid. It is found in the chloroplast. In terms of biological role, has a function in the early stage of chloroplast development and palisade cell morphogenesis. Required for correct plastid ribosome assembly. Required for processing and maturation of 4.5S rRNA. This Solanum lycopersicum (Tomato) protein is Protein DCL, chloroplastic (DCL).